Consider the following 327-residue polypeptide: Clavesin-2 (327 aa).

The CRAL-TRIO domain occupies 96 to 257 (IKQALKDGFP…EFGGMLPPYD (162 aa)). Residues 287-327 (EVEKELSPKSMKRSQSVVDPTVLKRMDKNEEENMQPLLSLD) are disordered. Serine 325 is subject to Phosphoserine.

Forms a complex with clathrin heavy chain and gamma-adaptin.

The protein localises to the golgi apparatus. It localises to the trans-Golgi network membrane. Its subcellular location is the cytoplasmic vesicle. The protein resides in the clathrin-coated vesicle. It is found in the early endosome membrane. Functionally, required for normal morphology of late endosomes and/or lysosomes in neurons. Binds phosphatidylinositol 3,5-bisphosphate (PtdIns(3,5)P2). The polypeptide is Clavesin-2 (CLVS2) (Homo sapiens (Human)).